Here is a 281-residue protein sequence, read N- to C-terminus: Glyoxalase 1 (281 aa).

VOC domains follow at residues 4–127 (RALH…IGKA) and 132–251 (KVLR…FVGD).

Belongs to the glyoxalase I family. Expressed in the following tissues in both larvae and adults: pharynx, pharyngeal-intestinal valve, intestine, anal sphincter, vulval muscle, seam cells and the nervous system.

Functionally, thought to act as a glyoxalase. May remove methylglyoxal from mitochondrial proteins. Has roles in reducing oxidative stress and increasing lifespan. This Caenorhabditis elegans protein is Glyoxalase 1 (glod-4).